A 201-amino-acid polypeptide reads, in one-letter code: Dephospho-CoA kinase (201 aa).

Residues 4 to 201 (AFFVTASIAC…VIQEISKGNM (198 aa)) enclose the DPCK domain. 12-17 (ACGKST) provides a ligand contact to ATP.

This sequence belongs to the CoaE family.

It localises to the cytoplasm. It catalyses the reaction 3'-dephospho-CoA + ATP = ADP + CoA + H(+). It functions in the pathway cofactor biosynthesis; coenzyme A biosynthesis; CoA from (R)-pantothenate: step 5/5. In terms of biological role, catalyzes the phosphorylation of the 3'-hydroxyl group of dephosphocoenzyme A to form coenzyme A. The chain is Dephospho-CoA kinase from Campylobacter jejuni subsp. jejuni serotype O:2 (strain ATCC 700819 / NCTC 11168).